We begin with the raw amino-acid sequence, 129 residues long: Glycine cleavage system H protein (129 aa).

Residues 24 to 106 (IAVIGITAYA…YGDGWLIKVR (83 aa)) enclose the Lipoyl-binding domain. Position 65 is an N6-lipoyllysine (lysine 65).

Belongs to the GcvH family. As to quaternary structure, the glycine cleavage system is composed of four proteins: P, T, L and H. (R)-lipoate is required as a cofactor.

Functionally, the glycine cleavage system catalyzes the degradation of glycine. The H protein shuttles the methylamine group of glycine from the P protein to the T protein. The polypeptide is Glycine cleavage system H protein (Synechococcus sp. (strain JA-2-3B'a(2-13)) (Cyanobacteria bacterium Yellowstone B-Prime)).